The primary structure comprises 235 residues: Ubiquinone/menaquinone biosynthesis C-methyltransferase UbiE (235 aa).

S-adenosyl-L-methionine contacts are provided by Thr-59, Asp-84, and Ser-123.

Belongs to the class I-like SAM-binding methyltransferase superfamily. MenG/UbiE family.

It catalyses the reaction a 2-demethylmenaquinol + S-adenosyl-L-methionine = a menaquinol + S-adenosyl-L-homocysteine + H(+). The catalysed reaction is a 2-methoxy-6-(all-trans-polyprenyl)benzene-1,4-diol + S-adenosyl-L-methionine = a 5-methoxy-2-methyl-3-(all-trans-polyprenyl)benzene-1,4-diol + S-adenosyl-L-homocysteine + H(+). The protein operates within quinol/quinone metabolism; menaquinone biosynthesis; menaquinol from 1,4-dihydroxy-2-naphthoate: step 2/2. Its pathway is cofactor biosynthesis; ubiquinone biosynthesis. Its function is as follows. Methyltransferase required for the conversion of demethylmenaquinol (DMKH2) to menaquinol (MKH2) and the conversion of 2-polyprenyl-6-methoxy-1,4-benzoquinol (DDMQH2) to 2-polyprenyl-3-methyl-6-methoxy-1,4-benzoquinol (DMQH2). The protein is Ubiquinone/menaquinone biosynthesis C-methyltransferase UbiE of Campylobacter jejuni subsp. jejuni serotype O:6 (strain 81116 / NCTC 11828).